Reading from the N-terminus, the 356-residue chain is MSFNSFGRVFRFSTWGESHGPAIGAVVDGCPPGLELSEADIQPWLDKRRPGTSRFTTQRQEPDQVRILSGVFEGRTTGTPISLMIDNVDQRSKDYSEVALAYRPGHADYAYDAKYGFRDHRGGGRSSARETASRVAAGAVARLVIPEVRIRAYLIELGGDRIDPAAFDDAAIDENPFFCPDRAAAARWEAIVDDARKAGSSVGAVVECVAEGVPAGWGAPLYAKLDSELAAACMSINAVKGVEIGDGFAAARLTGETNADPMRPGNDGKPVFLANHAGGIAGGIATGQPVVVRIALKPTSSILTPVETIGRDGKAADIRTKGRHDPCVGIRAAPVLEAMVALVLADQKLLHRAQIG.

2 residues coordinate NADP(+): Arg48 and Arg54. Residues 125-127, 237-238, Gly282, 297-301, and Arg323 each bind FMN; these read RSS, NA, and KPTSS.

It belongs to the chorismate synthase family. Homotetramer. Requires FMNH2 as cofactor.

The enzyme catalyses 5-O-(1-carboxyvinyl)-3-phosphoshikimate = chorismate + phosphate. It functions in the pathway metabolic intermediate biosynthesis; chorismate biosynthesis; chorismate from D-erythrose 4-phosphate and phosphoenolpyruvate: step 7/7. In terms of biological role, catalyzes the anti-1,4-elimination of the C-3 phosphate and the C-6 proR hydrogen from 5-enolpyruvylshikimate-3-phosphate (EPSP) to yield chorismate, which is the branch point compound that serves as the starting substrate for the three terminal pathways of aromatic amino acid biosynthesis. This reaction introduces a second double bond into the aromatic ring system. The protein is Chorismate synthase of Rhizorhabdus wittichii (strain DSM 6014 / CCUG 31198 / JCM 15750 / NBRC 105917 / EY 4224 / RW1) (Sphingomonas wittichii).